We begin with the raw amino-acid sequence, 650 residues long: DNA gyrase subunit B (650 aa).

The span at 400-414 (RRSQEARELTRRKSP) shows a compositional bias: basic and acidic residues. A disordered region spans residues 400–422 (RRSQEARELTRRKSPFDSGSLPG). The Toprim domain occupies 435-549 (SELYIVEGDS…QGNIYIAQPP (115 aa)). Mg(2+) contacts are provided by Glu-441, Asp-514, and Asp-516.

This sequence belongs to the type II topoisomerase GyrB family. As to quaternary structure, heterotetramer, composed of two GyrA and two GyrB chains. In the heterotetramer, GyrA contains the active site tyrosine that forms a transient covalent intermediate with DNA, while GyrB binds cofactors and catalyzes ATP hydrolysis. Mg(2+) serves as cofactor. It depends on Mn(2+) as a cofactor. Ca(2+) is required as a cofactor.

The protein resides in the cytoplasm. It catalyses the reaction ATP-dependent breakage, passage and rejoining of double-stranded DNA.. Its function is as follows. A type II topoisomerase that negatively supercoils closed circular double-stranded (ds) DNA in an ATP-dependent manner to modulate DNA topology and maintain chromosomes in an underwound state. Negative supercoiling favors strand separation, and DNA replication, transcription, recombination and repair, all of which involve strand separation. Also able to catalyze the interconversion of other topological isomers of dsDNA rings, including catenanes and knotted rings. Type II topoisomerases break and join 2 DNA strands simultaneously in an ATP-dependent manner. This chain is DNA gyrase subunit B, found in Mycoplasma pneumoniae (strain ATCC 29342 / M129 / Subtype 1) (Mycoplasmoides pneumoniae).